Consider the following 1187-residue polypeptide: Non-receptor tyrosine-protein kinase TYK2 (1187 aa).

An FERM domain is found at 26–431 (GGLKVLLHWA…GYFRLTADSS (406 aa)). Tyr-292 carries the phosphotyrosine modification. The segment at 335 to 366 (KEEGSSGSSGRNPQASLFGKKAKAHKAVGQPA) is disordered. Over residues 339 to 349 (SSGSSGRNPQA) the composition is skewed to polar residues. The region spanning 450-529 (GIHGPLLEPF…GRSFPSVREL (80 aa)) is the SH2; atypical domain. Phosphoserine occurs at positions 499 and 525. A Protein kinase 1 domain is found at 589–875 (ITQLSHLGQG…LTRLQPHNLA (287 aa)). Tyr-604 is modified (phosphotyrosine). The interval 610 to 629 (VEGSGDPEEGKMDDEDPLVP) is disordered. Over residues 614–626 (GDPEEGKMDDEDP) the composition is skewed to acidic residues. Ser-884 carries the phosphoserine modification. In terms of domain architecture, Protein kinase 2 spans 897-1176 (LKKIRDLGEG…PILKTVHEKY (280 aa)). ATP contacts are provided by residues 903 to 911 (LGEGHFGKV) and Lys-930. Catalysis depends on Asp-1023, which acts as the Proton acceptor. Tyr-1054 is subject to Phosphotyrosine; by autocatalysis. Position 1055 is a phosphotyrosine (Tyr-1055).

Belongs to the protein kinase superfamily. Tyr protein kinase family. JAK subfamily. In terms of assembly, interacts (via FERM domain) with JAKMIP1. Interacts with PIK3R1; this interaction is important for cell migration. Interacts with MPL/TPOR. (Microbial infection) Interacts with Epstein-Barr virus protein LMP1; this interaction inhibits TYK2-mediated interferon signaling. As to quaternary structure, (Microbial infection) Interacts with papillomavirus-18 protein E6; this interaction impairs JAK-STAT activation by interferon-alpha. In terms of assembly, (Microbial infection) Interacts with Epstein-Barr virus (EBV) tegument protein BGLF2; this interaction participates in the inhibition of type I IFN signaling by the virus. In terms of processing, phosphorylated. Phosphorylation by JAK1 at Tyr-1054 and Tyr-1055 induces kinase activation. As to expression, observed in all cell lines analyzed. Expressed in a variety of lymphoid and non-lymphoid cell lines.

It catalyses the reaction L-tyrosyl-[protein] + ATP = O-phospho-L-tyrosyl-[protein] + ADP + H(+). The protein kinase 1 domain (also termed pseudokinase domain) mediates autoinhibition of the TYK2 kinase domain. In terms of biological role, tyrosine kinase of the non-receptor type involved in numerous cytokines and interferons signaling, which regulates cell growth, development, cell migration, innate and adaptive immunity. Plays both structural and catalytic roles in numerous interleukins and interferons (IFN-alpha/beta) signaling. Associates with heterodimeric cytokine receptor complexes and activates STAT family members including STAT1, STAT3, STAT4 or STAT6. The heterodimeric cytokine receptor complexes are composed of (1) a TYK2-associated receptor chain (IFNAR1, IL12RB1, IL10RB or IL13RA1), and (2) a second receptor chain associated either with JAK1 or JAK2. In response to cytokine-binding to receptors, phosphorylates and activates receptors (IFNAR1, IL12RB1, IL10RB or IL13RA1), creating docking sites for STAT members. In turn, recruited STATs are phosphorylated by TYK2 (or JAK1/JAK2 on the second receptor chain), form homo- and heterodimers, translocate to the nucleus, and regulate cytokine/growth factor responsive genes. Negatively regulates STAT3 activity by promototing phosphorylation at a specific tyrosine that differs from the site used for signaling. This is Non-receptor tyrosine-protein kinase TYK2 (TYK2) from Homo sapiens (Human).